Consider the following 294-residue polypeptide: Picrinine-N-methytransferase TMT2 (294 aa).

The SAM motif I stretch occupies residues 75 to 84 (LLDVGCGLGG). A Vacuolar targeting signal motif is present at residues 137–143 (DGEFDVV). The segment at 138-146 (GEFDVVFTL) is SAM motif II. The segment at 165–174 (VGSPGAAIVV) is SAM motif III.

This sequence belongs to the class I-like SAM-binding methyltransferase superfamily. gTMT family. Homodimer.

The protein resides in the vacuole membrane. It catalyses the reaction picrinine + S-adenosyl-L-methionine = ervincine + S-adenosyl-L-homocysteine + H(+). Its pathway is alkaloid biosynthesis; vindoline biosynthesis. Its function is as follows. S-adenosyl-L-methionine-dependent N-methyltransferase involved in the biosynthesis of biologically active monoterpenoid indole alkaloids (MIAs) natural products including vindoline. Catalyzes the conversion of picrinine to N-methylpicrinine (ervincine). This chain is Picrinine-N-methytransferase TMT2, found in Catharanthus roseus (Madagascar periwinkle).